We begin with the raw amino-acid sequence, 184 residues long: Exosome complex protein LRP1 (184 aa).

The interval 157-184 (DSTDHIRKASSKKSKRLDKVGKKKGGKK) is disordered. The span at 164–184 (KASSKKSKRLDKVGKKKGGKK) shows a compositional bias: basic residues.

Belongs to the C1D family. As to quaternary structure, associates with nuclear form of the RNA exosome complex. Interacts with RRP4, RRP6, RRP45 and RRP46.

The protein resides in the nucleus. Required for exosome-dependent processing of pre-rRNA and small nucleolar RNA (snRNA) precursors. Involved in processing of 35S pre-rRNA at the A0, A1 and A2 sites. Required for activity of RRP6 in 7S pre-rRNA processing. Also has a role in 3'-processing of U4 and U5 small nuclear RNAs (snRNAs). Acts as a mRNA export factor. Mediates mRNA degradation upon UV irradiation. Maintains genome integrity where it is involved in both non-homologous end joining (NHEJ) and homologous recombination pathway repair of double strand DNA breaks. During NHEJ, required for joining 3'-overhanging ends. Also involved in telomere length regulation and maintenance. The sequence is that of Exosome complex protein LRP1 (LRP1) from Saccharomyces cerevisiae (strain ATCC 204508 / S288c) (Baker's yeast).